A 431-amino-acid chain; its full sequence is Histidine--tRNA ligase (431 aa).

Belongs to the class-II aminoacyl-tRNA synthetase family.

Its subcellular location is the cytoplasm. The enzyme catalyses tRNA(His) + L-histidine + ATP = L-histidyl-tRNA(His) + AMP + diphosphate + H(+). The protein is Histidine--tRNA ligase (hisS) of Pyrococcus abyssi (strain GE5 / Orsay).